A 358-amino-acid polypeptide reads, in one-letter code: 3-isopropylmalate dehydrogenase (358 aa).

Residues arginine 92, arginine 102, arginine 130, and aspartate 224 each coordinate substrate. Mg(2+) is bound by residues aspartate 224, aspartate 248, and aspartate 252. 282-294 (GSAPDIAGQGIAN) provides a ligand contact to NAD(+).

This sequence belongs to the isocitrate and isopropylmalate dehydrogenases family. LeuB type 1 subfamily. Homodimer. It depends on Mg(2+) as a cofactor. Mn(2+) serves as cofactor.

The protein resides in the cytoplasm. It carries out the reaction (2R,3S)-3-isopropylmalate + NAD(+) = 4-methyl-2-oxopentanoate + CO2 + NADH. The protein operates within amino-acid biosynthesis; L-leucine biosynthesis; L-leucine from 3-methyl-2-oxobutanoate: step 3/4. Functionally, catalyzes the oxidation of 3-carboxy-2-hydroxy-4-methylpentanoate (3-isopropylmalate) to 3-carboxy-4-methyl-2-oxopentanoate. The product decarboxylates to 4-methyl-2 oxopentanoate. The chain is 3-isopropylmalate dehydrogenase from Bordetella pertussis (strain Tohama I / ATCC BAA-589 / NCTC 13251).